A 535-amino-acid chain; its full sequence is Probable C4-dicarboxylate sensor kinase (535 aa).

At 1-11 the chain is on the cytoplasmic side; the sequence is MNKKKLSIRWK. The helical transmembrane segment at 12–32 threads the bilayer; the sequence is ITILSYILVIFSFLIGGIVLI. Residues 33–172 lie on the Extracellular side of the membrane; it reads GNIQHTEERE…IADILLHLKR (140 aa). The chain crosses the membrane as a helical span at residues 173–193; that stretch reads DIAFIVVLTLGFGLAGSFLLA. Residues 194–535 lie on the Cytoplasmic side of the membrane; that stretch reads RHIKKQMFQL…MKGEEAQHGS (342 aa). A PAS domain is found at 213 to 276; sequence EERTATFHSM…PEIVERNKAV (64 aa). The Histidine kinase domain maps to 333–528; the sequence is VQNHEHMNKL…SFSIVFPMKG (196 aa). Histidine 336 is modified (phosphohistidine; by autocatalysis).

It localises to the cell membrane. It catalyses the reaction ATP + protein L-histidine = ADP + protein N-phospho-L-histidine.. Functionally, member of the two-component regulatory system DctS/DctR. Probably activates DctR by phosphorylation. Essential for expression of dctP. This Bacillus subtilis (strain 168) protein is Probable C4-dicarboxylate sensor kinase (dctS).